Consider the following 246-residue polypeptide: Uridylate kinase (246 aa).

18 to 21 (KLSG) lines the ATP pocket. Gly-60 lines the UMP pocket. Residues Gly-61 and Arg-65 each contribute to the ATP site. Residues Asp-80 and 141-148 (TGNPFFTT) each bind UMP. Positions 168, 174, and 177 each coordinate ATP.

The protein belongs to the UMP kinase family. In terms of assembly, homohexamer.

The protein localises to the cytoplasm. The catalysed reaction is UMP + ATP = UDP + ADP. It functions in the pathway pyrimidine metabolism; CTP biosynthesis via de novo pathway; UDP from UMP (UMPK route): step 1/1. Its activity is regulated as follows. Inhibited by UTP. Its function is as follows. Catalyzes the reversible phosphorylation of UMP to UDP. In Pseudomonas syringae pv. syringae (strain B728a), this protein is Uridylate kinase.